The sequence spans 587 residues: Aspartate--tRNA ligase (587 aa).

Position 173 (E173) interacts with L-aspartate. The tract at residues 197–200 (QTLK) is aspartate. R219 is a binding site for L-aspartate. Residues 219-221 (RDE) and Q228 each bind ATP. Position 446 (H446) interacts with L-aspartate. E480 serves as a coordination point for ATP. R487 lines the L-aspartate pocket. 532-535 (GLDR) contributes to the ATP binding site.

This sequence belongs to the class-II aminoacyl-tRNA synthetase family. Type 1 subfamily. As to quaternary structure, homodimer.

It localises to the cytoplasm. The catalysed reaction is tRNA(Asp) + L-aspartate + ATP = L-aspartyl-tRNA(Asp) + AMP + diphosphate. In terms of biological role, catalyzes the attachment of L-aspartate to tRNA(Asp) in a two-step reaction: L-aspartate is first activated by ATP to form Asp-AMP and then transferred to the acceptor end of tRNA(Asp). The protein is Aspartate--tRNA ligase of Bacteroides thetaiotaomicron (strain ATCC 29148 / DSM 2079 / JCM 5827 / CCUG 10774 / NCTC 10582 / VPI-5482 / E50).